Consider the following 329-residue polypeptide: Cathepsin K (329 aa).

Positions 1–15 are cleaved as a signal peptide; that stretch reads MWGLKVLLLPVVSFA. A propeptide spans 16 to 114 (activation peptide); that stretch reads LYPEEILDTH…TLYIPEWEGR (99 aa). N-linked (GlcNAc...) asparagine glycosylation occurs at N103. 3 cysteine pairs are disulfide-bonded: C136/C177, C170/C210, and C269/C318. C139 is a catalytic residue. Active-site residues include H276 and N296.

Belongs to the peptidase C1 family. In terms of tissue distribution, predominantly expressed in osteoclasts (bones). Expressed in thyroid epithelial cells.

Its subcellular location is the lysosome. The protein localises to the secreted. The protein resides in the apical cell membrane. It catalyses the reaction Broad proteolytic activity. With small-molecule substrates and inhibitors, the major determinant of specificity is P2, which is preferably Leu, Met &gt; Phe, and not Arg.. In terms of biological role, thiol protease involved in osteoclastic bone resorption and may participate partially in the disorder of bone remodeling. Displays potent endoprotease activity against fibrinogen at acid pH. May play an important role in extracellular matrix degradation. Involved in the release of thyroid hormone thyroxine (T4) by limited proteolysis of TG/thyroglobulin in the thyroid follicle lumen. The polypeptide is Cathepsin K (CTSK) (Homo sapiens (Human)).